Here is a 123-residue protein sequence, read N- to C-terminus: Large ribosomal subunit protein uL14 (123 aa).

It belongs to the universal ribosomal protein uL14 family. In terms of assembly, part of the 50S ribosomal subunit. Forms a cluster with proteins L3 and L19. In the 70S ribosome, L14 and L19 interact and together make contacts with the 16S rRNA in bridges B5 and B8.

Binds to 23S rRNA. Forms part of two intersubunit bridges in the 70S ribosome. This chain is Large ribosomal subunit protein uL14, found in Pectobacterium atrosepticum (strain SCRI 1043 / ATCC BAA-672) (Erwinia carotovora subsp. atroseptica).